We begin with the raw amino-acid sequence, 700 residues long: Methionine--tRNA ligase (700 aa).

The 'HIGH' region motif lies at 16–26; the sequence is PYANGAFHVGH. Residues Cys-148, Cys-151, Cys-161, and Cys-164 each coordinate Zn(2+). The 'KMSKS' region signature appears at 337–341; sequence KMSKS. Residue Lys-340 coordinates ATP. The region spanning 594–700 is the tRNA-binding domain; it reads DFAKIDLRIA…PGAEPGMRVG (107 aa).

This sequence belongs to the class-I aminoacyl-tRNA synthetase family. MetG type 1 subfamily. In terms of assembly, homodimer. Zn(2+) is required as a cofactor.

The protein localises to the cytoplasm. The enzyme catalyses tRNA(Met) + L-methionine + ATP = L-methionyl-tRNA(Met) + AMP + diphosphate. Its function is as follows. Is required not only for elongation of protein synthesis but also for the initiation of all mRNA translation through initiator tRNA(fMet) aminoacylation. The sequence is that of Methionine--tRNA ligase from Janthinobacterium sp. (strain Marseille) (Minibacterium massiliensis).